A 341-amino-acid polypeptide reads, in one-letter code: NADH-quinone oxidoreductase subunit H (341 aa).

8 helical membrane-spanning segments follow: residues 16–36, 86–106, 119–139, 165–185, 191–211, 254–274, 276–296, and 315–335; these read LLII…AVAY, VVFV…WAVI, VGVL…IMAG, IGFI…SDVV, MWFI…GLAE, GAMT…LGWL, IPGL…FLWV, and VFLP…TAFG.

It belongs to the complex I subunit 1 family. In terms of assembly, NDH-1 is composed of 14 different subunits. Subunits NuoA, H, J, K, L, M, N constitute the membrane sector of the complex.

The protein localises to the cell inner membrane. The catalysed reaction is a quinone + NADH + 5 H(+)(in) = a quinol + NAD(+) + 4 H(+)(out). In terms of biological role, NDH-1 shuttles electrons from NADH, via FMN and iron-sulfur (Fe-S) centers, to quinones in the respiratory chain. The immediate electron acceptor for the enzyme in this species is believed to be ubiquinone. Couples the redox reaction to proton translocation (for every two electrons transferred, four hydrogen ions are translocated across the cytoplasmic membrane), and thus conserves the redox energy in a proton gradient. This subunit may bind ubiquinone. The sequence is that of NADH-quinone oxidoreductase subunit H from Paramagnetospirillum magneticum (strain ATCC 700264 / AMB-1) (Magnetospirillum magneticum).